The following is a 639-amino-acid chain: MAU2 chromatid cohesion factor homolog (639 aa).

2 TPR repeats span residues G453 to E486 and S493 to I526.

This sequence belongs to the SCC4/mau-2 family. Interacts with Nipped-B to form the cohesin loading complex.

It is found in the nucleus. The protein resides in the nucleoplasm. Required for association of the cohesin complex with chromatin during interphase. Plays a role in sister chromatid cohesion and normal progression through prometaphase. This is MAU2 chromatid cohesion factor homolog from Drosophila ananassae (Fruit fly).